Here is a 164-residue protein sequence, read N- to C-terminus: S-ribosylhomocysteine lyase (164 aa).

His-54, His-58, and Cys-128 together coordinate Fe cation.

The protein belongs to the LuxS family. In terms of assembly, homodimer. Fe cation serves as cofactor.

The catalysed reaction is S-(5-deoxy-D-ribos-5-yl)-L-homocysteine = (S)-4,5-dihydroxypentane-2,3-dione + L-homocysteine. Functionally, involved in the synthesis of autoinducer 2 (AI-2) which is secreted by bacteria and is used to communicate both the cell density and the metabolic potential of the environment. The regulation of gene expression in response to changes in cell density is called quorum sensing. Catalyzes the transformation of S-ribosylhomocysteine (RHC) to homocysteine (HC) and 4,5-dihydroxy-2,3-pentadione (DPD). This is S-ribosylhomocysteine lyase from Campylobacter jejuni subsp. jejuni serotype O:2 (strain ATCC 700819 / NCTC 11168).